The chain runs to 623 residues: Prothrombin (623 aa).

The first 24 residues, 1–24, serve as a signal peptide directing secretion; the sequence is MAHVRGLQLPGCLALAALCTLVHS. A propeptide spanning residues 25 to 43 is cleaved from the precursor; it reads QHVFLAPQQALSLLQRVRR. The 47-residue stretch at 44–90 folds into the Gla domain; it reads ANSVFLEEVRKGNLERECVEETCSYEEAFEALESSTATDVFWAKYTA. 4-carboxyglutamate is present on residues Glu-50, Glu-51, Glu-58, Glu-60, Glu-63, Glu-64, Glu-69, Glu-70, Glu-73, and Glu-76. Cysteines 61 and 66 form a disulfide. Intrachain disulfides connect Cys-91–Cys-104, Cys-109–Cys-187, Cys-130–Cys-170, Cys-158–Cys-182, Cys-214–Cys-292, Cys-235–Cys-275, Cys-263–Cys-287, Cys-337–Cys-483, Cys-392–Cys-408, Cys-537–Cys-551, and Cys-565–Cys-595. Kringle domains lie at 108 to 187 and 213 to 292; these read NCAE…IPVC and QCVP…LNYC. 2 N-linked (GlcNAc...) asparagine glycosylation sites follow: Asn-122 and Asn-144. The Peptidase S1 domain occupies 365 to 619; sequence IVEGSDAEIG…LKKWIQKVID (255 aa). Catalysis depends on His-407, which acts as the Charge relay system. The N-linked (GlcNAc...) asparagine glycan is linked to Asn-417. Asp-463 acts as the Charge relay system in catalysis. The tract at residues 552 to 574 is high affinity receptor-binding region which also known as the TP508 peptide; it reads AGYKPDEGKRGDACEGDSGGPFV. Ser-569 serves as the catalytic Charge relay system.

It belongs to the peptidase S1 family. In terms of assembly, heterodimer (named alpha-thrombin) of a light and a heavy chain; disulfide-linked. Forms a heterodimer with SERPINA5. In plasma, interacts (via N-terminus) with alpha-1-microglobulin; this interaction does not prevent the activation of prothrombin to thrombin. Post-translationally, the gamma-carboxyglutamyl residues, which bind calcium ions, result from the carboxylation of glutamyl residues by a microsomal enzyme, the vitamin K-dependent carboxylase. The modified residues are necessary for the calcium-dependent interaction with a negatively charged phospholipid surface, which is essential for the conversion of prothrombin to thrombin. In terms of processing, in the penultimate step of the coagulation cascade, prothrombin is converted to thrombin by the prothrombinase complex composed of factor Xa (F10), cofactor Va (F5), and phospholipids. This activation requires factor Xa-catalyzed sequential cleavage at 2 sites, Arg-315 and Arg-364, along 2 possible pathways. In the first pathway, the first cleavage occurs at Arg-315, leading to the formation of the inactive intermediate prethrombin-2. This pathway preferentially occurs on platelets and in the absence of cofactor Va. In the second pathway, the first cleavage occurs at Arg-364, which separates protease domain into 2 chains that remain connected through a disulfide bond and generates the active intermediate meizothrombin. The presence of cofactor Va directs activation along the meizothrombin pathway and greatly accelerates the rate of cleavage at Arg-364, but has a smaller effect on the cleavage of meizothrombin at Arg-315. Meizothrombin accumulates as an intermediate when prothrombinase is assembled on the membrane of red blood cells.

The catalysed reaction is Selective cleavage of Arg-|-Gly bonds in fibrinogen to form fibrin and release fibrinopeptides A and B.. Its activity is regulated as follows. Activity is promoted in the presence of negatively charged surfaces, such as polyphosphate and dextran sulfate. Inhibited by SERPINA5. In terms of biological role, thrombin, which cleaves bonds after Arg and Lys, converts fibrinogen to fibrin and activates factors V, VII, VIII, XIII, and, in complex with thrombomodulin, protein C. Functions in blood homeostasis, inflammation and wound healing. Activates coagulation factor XI (F11); activation is promoted by the contact with negatively charged surfaces. Triggers the production of pro-inflammatory cytokines, such as MCP-1/CCL2 and IL8/CXCL8, in endothelial cells. This chain is Prothrombin (F2), found in Pongo abelii (Sumatran orangutan).